We begin with the raw amino-acid sequence, 389 residues long: Chalcone synthase 4-1 (389 aa).

C164 is an active-site residue.

Belongs to the thiolase-like superfamily. Chalcone/stilbene synthases family.

The enzyme catalyses (E)-4-coumaroyl-CoA + 3 malonyl-CoA + 3 H(+) = 2',4,4',6'-tetrahydroxychalcone + 3 CO2 + 4 CoA. It functions in the pathway secondary metabolite biosynthesis; flavonoid biosynthesis. The primary product of this enzyme is 4,2',4',6'-tetrahydroxychalcone (also termed naringenin-chalcone or chalcone) which can under specific conditions spontaneously isomerize into naringenin. The polypeptide is Chalcone synthase 4-1 (CHS4-1) (Medicago sativa (Alfalfa)).